A 431-amino-acid polypeptide reads, in one-letter code: Adenylosuccinate synthetase (431 aa).

GTP contacts are provided by residues 12–18 (GDEGKGK) and 40–42 (GHT). Residue Asp-13 is the Proton acceptor of the active site. Mg(2+)-binding residues include Asp-13 and Gly-40. IMP contacts are provided by residues 13–16 (DEGK), 38–41 (NAGH), Thr-129, Arg-143, Gln-224, Thr-239, and Arg-303. His-41 serves as the catalytic Proton donor. Residue 299–305 (VTTGRAR) coordinates substrate. Residues Arg-305, 331–333 (KLD), and 413–415 (GVG) each bind GTP.

This sequence belongs to the adenylosuccinate synthetase family. Homodimer. Mg(2+) serves as cofactor.

The protein resides in the cytoplasm. The catalysed reaction is IMP + L-aspartate + GTP = N(6)-(1,2-dicarboxyethyl)-AMP + GDP + phosphate + 2 H(+). Its pathway is purine metabolism; AMP biosynthesis via de novo pathway; AMP from IMP: step 1/2. Its function is as follows. Plays an important role in the de novo pathway of purine nucleotide biosynthesis. Catalyzes the first committed step in the biosynthesis of AMP from IMP. This Mycobacterium sp. (strain KMS) protein is Adenylosuccinate synthetase.